Consider the following 241-residue polypeptide: Ubiquinone biosynthesis O-methyltransferase (241 aa).

Residues Arg44, Gly64, Asp85, and Met129 each contribute to the S-adenosyl-L-methionine site.

This sequence belongs to the methyltransferase superfamily. UbiG/COQ3 family.

It carries out the reaction a 3-demethylubiquinol + S-adenosyl-L-methionine = a ubiquinol + S-adenosyl-L-homocysteine + H(+). The enzyme catalyses a 3-(all-trans-polyprenyl)benzene-1,2-diol + S-adenosyl-L-methionine = a 2-methoxy-6-(all-trans-polyprenyl)phenol + S-adenosyl-L-homocysteine + H(+). Its pathway is cofactor biosynthesis; ubiquinone biosynthesis. Its function is as follows. O-methyltransferase that catalyzes the 2 O-methylation steps in the ubiquinone biosynthetic pathway. The protein is Ubiquinone biosynthesis O-methyltransferase of Serratia proteamaculans (strain 568).